Here is a 659-residue protein sequence, read N- to C-terminus: RNA-binding E3 ubiquitin-protein ligase MEX3C (659 aa).

Positions 1–15 are enriched in low complexity; it reads MPSGSSAALALAAAP. The tract at residues 1–140 is disordered; the sequence is MPSGSSAALA…EEAEEEDRSS (140 aa). A compositionally biased stretch (pro residues) spans 16–37; it reads APLPQPPPPPPPPPPPLPPPSG. Positions 64–82 are enriched in low complexity; that stretch reads EPGAPALRAPAAAAQGQAR. Basic and acidic residues predominate over residues 83-94; that stretch reads RAAELSPEERAP. Position 88 is a phosphoserine (serine 88). The segment covering 104–137 has biased composition (acidic residues); that stretch reads AELELEEDEEEGEEAELDGDLLEEEELEEAEEED. KH domains lie at 232-293 and 326-387; these read TTEC…KREI and QTTV…REEI. Residues 513 to 569 form a disordered region; that stretch reads FEPVNPLSGFGSDPSGNMKTQRRGSQPSTPRLSPTFPESIEHPLARRVRSDPPSTGN. Over residues 526–544 the composition is skewed to polar residues; it reads PSGNMKTQRRGSQPSTPRL. A phosphoserine mark is found at serine 537 and serine 545. A compositionally biased stretch (basic and acidic residues) spans 551–562; sequence SIEHPLARRVRS. The segment at 608–648 adopts an RING-type zinc-finger fold; the sequence is CVICFENEVIAALVPCGHNLFCMECANKICEKRTPSCPVCQ.

In terms of assembly, interacts with USP7, which antagonizes the ability to degrade mRNA. In terms of tissue distribution, highest levels found in fetal brain and testis. Also expressed in thymus, salivary gland and uterus. Highly expressed in cells of the innate immune system, in particular activated NK cells. Week expression in the intestine.

The protein localises to the cytoplasm. It localises to the nucleus. The catalysed reaction is S-ubiquitinyl-[E2 ubiquitin-conjugating enzyme]-L-cysteine + [acceptor protein]-L-lysine = [E2 ubiquitin-conjugating enzyme]-L-cysteine + N(6)-ubiquitinyl-[acceptor protein]-L-lysine.. Functionally, E3 ubiquitin ligase responsible for the post-transcriptional regulation of common HLA-A allotypes. Binds to the 3' UTR of HLA-A2 mRNA, and regulates its levels by promoting mRNA decay. RNA binding is sufficient to prevent translation, but ubiquitin ligase activity is required for mRNA degradation. In Homo sapiens (Human), this protein is RNA-binding E3 ubiquitin-protein ligase MEX3C (MEX3C).